The chain runs to 123 residues: Large ribosomal subunit protein uL18 (123 aa).

It belongs to the universal ribosomal protein uL18 family. As to quaternary structure, part of the 50S ribosomal subunit; part of the 5S rRNA/L5/L18/L25 subcomplex. Contacts the 5S and 23S rRNAs.

In terms of biological role, this is one of the proteins that bind and probably mediate the attachment of the 5S RNA into the large ribosomal subunit, where it forms part of the central protuberance. The protein is Large ribosomal subunit protein uL18 of Wolbachia pipientis wMel.